The following is a 183-amino-acid chain: GMP synthase [glutamine-hydrolyzing] subunit A (183 aa).

The Glutamine amidotransferase type-1 domain maps to 2-183 (KIYVIYNYGQ…YRNFIEICKK (182 aa)). C74 acts as the Nucleophile in catalysis. Catalysis depends on residues H161 and E163.

As to quaternary structure, heterodimer composed of a glutamine amidotransferase subunit (A) and a GMP-binding subunit (B).

The catalysed reaction is XMP + L-glutamine + ATP + H2O = GMP + L-glutamate + AMP + diphosphate + 2 H(+). It participates in purine metabolism; GMP biosynthesis; GMP from XMP (L-Gln route): step 1/1. Catalyzes the synthesis of GMP from XMP. This chain is GMP synthase [glutamine-hydrolyzing] subunit A, found in Archaeoglobus fulgidus (strain ATCC 49558 / DSM 4304 / JCM 9628 / NBRC 100126 / VC-16).